A 609-amino-acid polypeptide reads, in one-letter code: MAPPHPRDPSTAANYEQVTVSHYALKWKVDFEKKHIAGDVSITLDVKQDTERIVLDTRDLSVQSVALNLNGEPKKAGFTLEDNQALGQKLVITTESLKSGDRPVLEIKYESSNNAAALQFLTAEQTTDRVAPYLFSQCQAINARSIVPCMDTPSVKSTYEAEVCVPIGLTCLMSAIGQGSTPSECGKRTIFSFKQPVSIPSYLLAIVVGHLERKEISERCAVWAEPSQAEASFYEFAETEKILKVAEDVAGPYVWGRYDLVVLPATFPFGGMENPCLTFITPTLLAGDRSLVNVIAHEISHSWTGNLVTNFSWEHFWLNEGFTVFLERKIHGKMYGELERQFESESGYEEALVRTVNDVFGPDHEYTKLVQNLGNADPDDAFSSVPYEKGSALLFTIEQALGDNSRFEQFLRDYIQKYAYKTVSTEEWKEYLYDSFTDKKVILDNIDWNLWLHKAGLPPKPKYDSTPMQACKDLAAKWTTEGSEAPTDGEVFAKMSNSQKLAVLDAVRVNKTMFGDRMPALTATYKLDQAKNAELKFSWLMLGLETKWSPIVDASLAFALAVGRMKYCKPIYRSLFGWSATRDRAISQFKANIPNMHPITVKAIQSLLK.

Substrate is bound by residues 137–139 (QCQ) and 268–273 (PFGGME). H297 serves as a coordination point for Zn(2+). E298 functions as the Proton acceptor in the catalytic mechanism. The Zn(2+) site is built by H301 and E320. Y387 serves as the catalytic Proton donor. 564–566 (RMK) is a substrate binding site.

This sequence belongs to the peptidase M1 family. It depends on Zn(2+) as a cofactor.

Its subcellular location is the cytoplasm. The enzyme catalyses Release of N-terminal Arg and Lys from oligopeptides when P1' is not Pro. Also acts on arylamides of Arg and Lys.. In terms of biological role, aminopeptidase which preferentially removes N-terminal Arg and Lys residues from peptides and proteins. This is Aminopeptidase ltah-1.1 from Caenorhabditis elegans.